Reading from the N-terminus, the 211-residue chain is Outer-membrane lipoprotein carrier protein (211 aa).

A signal peptide spans methionine 1–alanine 24.

This sequence belongs to the LolA family. As to quaternary structure, monomer.

It is found in the periplasm. Its function is as follows. Participates in the translocation of lipoproteins from the inner membrane to the outer membrane. Only forms a complex with a lipoprotein if the residue after the N-terminal Cys is not an aspartate (The Asp acts as a targeting signal to indicate that the lipoprotein should stay in the inner membrane). This chain is Outer-membrane lipoprotein carrier protein, found in Cupriavidus necator (strain ATCC 17699 / DSM 428 / KCTC 22496 / NCIMB 10442 / H16 / Stanier 337) (Ralstonia eutropha).